Reading from the N-terminus, the 68-residue chain is Agnoprotein (68 aa).

Over 1–24 (MVLRQLSRQASVKVGKTWTGTKRR) the chain is Cytoplasmic. S7 and S11 each carry phosphoserine; by host. T21 carries the post-translational modification Phosphothreonine; by host. Residues 25 to 41 (AQRIFIFILELLLDFCR) form a helical; Signal-anchor for type II membrane protein membrane-spanning segment. The Extracellular segment spans residues 42-68 (GEDSVDGKKKKDSLTDKTETVTEKKES). Residues 44–68 (DSVDGKKKKDSLTDKTETVTEKKES) form a disordered region.

This sequence belongs to the polyomavirus agnoprotein family. Homooligomer. Interacts with VP1. Interacts with large T antigen; this interaction may impact upon the activity of T-antigen on the control of viral gene transcription and replication. Interacts with small t antigen. Interacts with host CBX5; this interaction induces the dissociation of CBX5 from LBR, resulting in destabilization of the nuclear envelope. Phosphorylated by host PKC. Phosphorylation alters the stability and may also have an impact on the subcellular location.

The protein localises to the host cytoplasm. The protein resides in the host nucleus membrane. It is found in the host rough endoplasmic reticulum membrane. It localises to the host cell membrane. Its function is as follows. Alters the structure of the nuclear envelope by interacting with host CBX5 and disrupting CBX5 association with LBR. Involved in the perinuclear-nuclear localization of the capsid protein VP1 during virion assembly and maturation. Plays an important role in the release of progeny virions from infected cells and in viral propagation, probably by acting as a viral ionic channel in the host plasma membrane. Allows influx of extracellular calcium ions in the host cell. May contribute to viral genome transcription and translation of viral late proteins. This Simian virus 12 (strain wt100) (SV-12) protein is Agnoprotein.